Consider the following 107-residue polypeptide: Replication restart protein PriB (107 aa).

Residues I8–D107 enclose the SSB domain.

Belongs to the PriB family. Homodimer. Interacts with PriA and DnaT. Component of the replication restart primosome. Primosome assembly occurs via a 'hand-off' mechanism. PriA binds to replication forks, subsequently PriB then DnaT bind; DnaT then displaces ssDNA to generate the helicase loading substrate.

In terms of biological role, involved in the restart of stalled replication forks, which reloads the replicative helicase on sites other than the origin of replication; the PriA-PriB pathway is the major replication restart pathway. During primosome assembly it facilitates complex formation between PriA and DnaT on DNA; stabilizes PriA on DNA. Stimulates the DNA unwinding activity of PriA helicase. The protein is Replication restart protein PriB of Actinobacillus succinogenes (strain ATCC 55618 / DSM 22257 / CCUG 43843 / 130Z).